Reading from the N-terminus, the 309-residue chain is Probable nitrogen assimilation transcriptional activator (309 aa).

Residues 1-57 (MRLEQLQAALRVAETGSFQEAAQKVGCNQSTISRQVKGLEDELGIALFRRQGRMKLT) form the HTH lysR-type domain. Residues 18–37 (FQEAAQKVGCNQSTISRQVK) constitute a DNA-binding region (H-T-H motif).

This sequence belongs to the LysR transcriptional regulatory family.

In terms of biological role, seems to regulate utilization of fixed nitrogen by controlling the expression of a certain gene(s) involved in nitrogen metabolism. The protein is Probable nitrogen assimilation transcriptional activator (ntcB) of Synechococcus elongatus (strain ATCC 33912 / PCC 7942 / FACHB-805) (Anacystis nidulans R2).